The primary structure comprises 259 residues: Adenylate kinase (259 aa).

52-57 contributes to the ATP binding site; the sequence is GAGKGT. An NMP region spans residues 72 to 101; sequence ATGDMLRSQVAKKTDLGREAKKIMDQGGLV. AMP is bound by residues Thr-73, Arg-78, 99-101, 128-131, and Gln-135; these read GLV and GFPR. An LID region spans residues 169 to 206; it reads GRLVHPASGRSYHKIFNPPKEAMKDDITGEPLVQRSDD. Residues Arg-170 and 179–180 contribute to the ATP site; that span reads SY. The AMP site is built by Arg-203 and Arg-214. Gln-242 serves as a coordination point for ATP.

Belongs to the adenylate kinase family. AK2 subfamily. In terms of assembly, monomer.

The protein localises to the cytoplasm. It localises to the mitochondrion intermembrane space. The enzyme catalyses AMP + ATP = 2 ADP. Catalyzes the reversible transfer of the terminal phosphate group between ATP and AMP. Plays an important role in cellular energy homeostasis and in adenine nucleotide metabolism. Adenylate kinase activity is critical for regulation of the phosphate utilization and the AMP de novo biosynthesis pathways. In Emericella nidulans (strain FGSC A4 / ATCC 38163 / CBS 112.46 / NRRL 194 / M139) (Aspergillus nidulans), this protein is Adenylate kinase (adk1).